The sequence spans 578 residues: Protein SIA1 (578 aa).

A signal peptide spans 1 to 28; that stretch reads MFRNRRILLYARRFFLVWICFLFITSWS.

May be involved in the activation of the plasma membrane proton-ATPase by glucose. The chain is Protein SIA1 (SIA1) from Kluyveromyces lactis (strain ATCC 8585 / CBS 2359 / DSM 70799 / NBRC 1267 / NRRL Y-1140 / WM37) (Yeast).